A 503-amino-acid chain; its full sequence is uncharacterized protein (503 aa).

Positions 437-465 (LNKDLILENLIETENENDKQEFQKLLRTI) form a coiled coil.

The protein belongs to the IIV-6 467R family.

This is an uncharacterized protein from Invertebrate iridescent virus 6 (IIV-6).